We begin with the raw amino-acid sequence, 450 residues long: ATP-dependent protease ATPase subunit HslU (450 aa).

Residues V29, 71-76 (GVGKTE), D261, E328, and R400 contribute to the ATP site.

The protein belongs to the ClpX chaperone family. HslU subfamily. A double ring-shaped homohexamer of HslV is capped on each side by a ring-shaped HslU homohexamer. The assembly of the HslU/HslV complex is dependent on binding of ATP.

It is found in the cytoplasm. ATPase subunit of a proteasome-like degradation complex; this subunit has chaperone activity. The binding of ATP and its subsequent hydrolysis by HslU are essential for unfolding of protein substrates subsequently hydrolyzed by HslV. HslU recognizes the N-terminal part of its protein substrates and unfolds these before they are guided to HslV for hydrolysis. This Rickettsia prowazekii (strain Madrid E) protein is ATP-dependent protease ATPase subunit HslU.